We begin with the raw amino-acid sequence, 266 residues long: 15-hydroxyprostaglandin dehydrogenase [NAD(+)] (266 aa).

NAD(+) is bound by residues 12–20, 36–37, 63–65, and N91; these read GAAQGIGRA, DW, and CDV. Substrate-binding residues include S138 and Q148. The active-site Proton acceptor is the Y151. NAD(+) is bound by residues 151-155 and 186-188; these read YCASK and VNT.

It belongs to the short-chain dehydrogenases/reductases (SDR) family. Homodimer.

It localises to the cytoplasm. The enzyme catalyses prostaglandin E2 + NAD(+) = 15-oxoprostaglandin E2 + NADH + H(+). It catalyses the reaction (15S)-hydroxy-(5Z,8Z,11Z,13E)-eicosatetraenoate + NAD(+) = 15-oxo-(5Z,8Z,11Z,13E)-eicosatetraenoate + NADH + H(+). It carries out the reaction (11R)-hydroxy-(5Z,8Z,12E,14Z)-eicosatetraenoate + NAD(+) = 11-oxo-(5Z,8Z,12E,14Z)-eicosatetraenoate + NADH + H(+). The catalysed reaction is lipoxin A4 + NAD(+) = 15-oxo-(5S,6R)-dihydroxy-(7E,9E,11Z,13E)-eicosatetraenoate + NADH + H(+). The enzyme catalyses 15-oxo-(5S,6R)-dihydroxy-(7E,9E,11Z)-eicosatrienoate + NADH + H(+) = (5S,6R,15S)-trihydroxy-(7E,9E,11Z)-eicosatrienoate + NAD(+). It catalyses the reaction prostaglandin A1 + NAD(+) = 15-oxo-prostaglandin A1 + NADH + H(+). It carries out the reaction prostaglandin E1 + NAD(+) = 15-oxoprostaglandin E1 + NADH + H(+). The catalysed reaction is 14-hydroxy-(4Z,7Z,10Z,12E,16Z,19Z)-docosahexaenoate + NAD(+) = 14-oxo-(4Z,7Z,10Z,12E,16Z,19Z)-docosahexaenoate + NADH + H(+). The enzyme catalyses resolvin E1 + NAD(+) = 18-oxo-resolvin E1 + NADH + H(+). It catalyses the reaction resolvin D1 + NAD(+) = 8-oxoresolvin D1 + NADH + H(+). It carries out the reaction resolvin D1 + NAD(+) = 17-oxoresolvin D1 + NADH + H(+). The catalysed reaction is resolvin D2 + NAD(+) = 7-oxoresolvin D2 + NADH + H(+). The enzyme catalyses resolvin D2 + NAD(+) = 16-oxoresolvin D2 + NADH + H(+). Functionally, catalyzes the NAD-dependent dehydrogenation (oxidation) of a broad array of hydroxylated polyunsaturated fatty acids (mainly eicosanoids and docosanoids, including prostaglandins, lipoxins and resolvins), yielding their corresponding keto (oxo) metabolites. Decreases the levels of the pro-proliferative prostaglandins such as prostaglandin E2 (whose activity is increased in cancer because of an increase in the expression of cyclooxygenase 2) and generates oxo-fatty acid products that can profoundly influence cell function by abrogating pro-inflammatory cytokine expression. Converts resolvins E1, D1 and D2 to their oxo products, which represents a mode of resolvin inactivation. Resolvin E1 plays important roles during the resolution phase of acute inflammation, while resolvins D1 and D2 have a unique role in obesity-induced adipose inflammation. The chain is 15-hydroxyprostaglandin dehydrogenase [NAD(+)] (HPGD) from Macaca fascicularis (Crab-eating macaque).